Reading from the N-terminus, the 346-residue chain is tRNA N6-adenosine threonylcarbamoyltransferase (346 aa).

The Fe cation site is built by His110 and His114. Substrate is bound by residues Leu132–Gly136, Asp165, Gly178, and Asn274. Position 298 (Asp298) interacts with Fe cation.

The protein belongs to the KAE1 / TsaD family. Requires Fe(2+) as cofactor.

It localises to the cytoplasm. It carries out the reaction L-threonylcarbamoyladenylate + adenosine(37) in tRNA = N(6)-L-threonylcarbamoyladenosine(37) in tRNA + AMP + H(+). In terms of biological role, required for the formation of a threonylcarbamoyl group on adenosine at position 37 (t(6)A37) in tRNAs that read codons beginning with adenine. Is involved in the transfer of the threonylcarbamoyl moiety of threonylcarbamoyl-AMP (TC-AMP) to the N6 group of A37, together with TsaE and TsaB. TsaD likely plays a direct catalytic role in this reaction. The protein is tRNA N6-adenosine threonylcarbamoyltransferase of Borreliella burgdorferi (strain ATCC 35210 / DSM 4680 / CIP 102532 / B31) (Borrelia burgdorferi).